Consider the following 468-residue polypeptide: Tyramine receptor tyra-2 (468 aa).

Residues Met-1–Ser-23 lie on the Extracellular side of the membrane. The helical transmembrane segment at Ala-24 to Leu-43 threads the bilayer. Residues Tyr-44–Asn-54 are Cytoplasmic-facing. A helical membrane pass occupies residues Leu-55–Val-77. Topologically, residues Tyr-78 to Cys-91 are extracellular. An intrachain disulfide couples Cys-91 to Cys-177. Residues Glu-92–Leu-114 form a helical membrane-spanning segment. Topologically, residues Asp-115–Thr-134 are cytoplasmic. Residues Ala-135–Trp-157 traverse the membrane as a helical segment. At Lys-158–Thr-186 the chain is on the extracellular side. A glycan (N-linked (GlcNAc...) asparagine) is linked at Asn-171. Residues Val-187–Tyr-209 form a helical membrane-spanning segment. At Gln-210–Lys-387 the chain is on the cytoplasmic side. The segment at Asp-252–Thr-306 is disordered. Acidic residues-rich tracts occupy residues Ala-255 to Glu-265 and Ile-281 to Ser-292. The chain crosses the membrane as a helical span at residues Val-388–Val-410. Residues Gln-411 to Met-424 lie on the Extracellular side of the membrane. A helical membrane pass occupies residues Phe-425–Phe-444. At Asn-445–Val-468 the chain is on the cytoplasmic side.

The protein belongs to the G-protein coupled receptor 1 family. In terms of tissue distribution, expressed in the pharyngeal neurons, MCL/R and NSML/R and the AS group of amphidial sensory neurons, ASEL/R, AGSL/R, ASHL/R and ASIL/R.

It is found in the cell membrane. Its function is as follows. G-protein coupled receptor for tyramine, a known neurotransmitter and neuromodulator and direct precursor of octopamine. Expression in amphidial sensory neurons suggests a role in chemosensation. This is Tyramine receptor tyra-2 (tyra-2) from Caenorhabditis elegans.